A 164-amino-acid chain; its full sequence is UPF0225 protein Shewmr4_2054 (164 aa).

The protein belongs to the UPF0225 family.

The polypeptide is UPF0225 protein Shewmr4_2054 (Shewanella sp. (strain MR-4)).